The primary structure comprises 904 residues: Protein abrupt (904 aa).

Residues Met-1 to Ala-15 show a composition bias toward polar residues. Disordered regions lie at residues Met-1–Val-30 and Gly-53–Gln-72. One can recognise a BTB domain in the interval Val-103–His-168. Residues Ser-204–Asn-238 show a composition bias toward low complexity. 4 disordered regions span residues Ser-204 to Pro-287, Ala-349 to Gln-390, Leu-411 to Glu-438, and Ala-451 to Ser-501. Residues Lys-239–Cys-253 are compositionally biased toward polar residues. Residues Asn-254 to Ser-286 are compositionally biased toward low complexity. The span at Ser-429–Glu-438 shows a compositional bias: basic and acidic residues. Positions Leu-452 to Asn-461 are enriched in polar residues. Ser-474 is modified (phosphoserine). A compositionally biased stretch (basic and acidic residues) spans Pro-481 to Arg-500. 2 C2H2-type zinc fingers span residues Arg-544–His-567 and Tyr-573–His-596. 2 disordered regions span residues Glu-633–Ser-696 and Ala-832–Thr-904. Positions Gly-642–Ser-655 are enriched in gly residues. Acidic residues predominate over residues Asp-671 to Asp-682. Ser-837, Ser-846, and Ser-868 each carry phosphoserine. The segment covering Met-851–Ser-868 has biased composition (basic and acidic residues). Residues Asp-876–Val-886 are compositionally biased toward polar residues. 2 positions are modified to phosphoserine: Ser-889 and Ser-896.

As to expression, expressed in CNS midline cells during embryonic stages 9-13. Expression also seen in cells of the stomagastric nervous system. Segmentally repeated stripes of ectodermal expression appear at stage 11 that become uniform by stage 12 and throughout embryogenesis. Expressed at variable levels in somatic muscles from stage 16 and in all imaginal disks during larval development. Expression is seen in da neurons that grow in two-dimensional dendrites underneath the epidermis during late embryonic, larval, and pupal stages.

The protein localises to the nucleus. Its function is as follows. Expression is vital for development; may be involved in transcriptional regulation. In embryos, muscle specific expression is required for segmental nerve b (SNb) motoneuron target recognition within ventral longitudinal muscles. Has a role in establishing and maintaining embryonic muscle attachments, adult sensory cell formation (macrochaetae) and morphogenesis of adult appendages (legs, antenna aristae and male external genitalia). Has a role in the morphogenesis of the class I dendritic neurons: selective expression of ab in class I da neurons plays a pivotal role in forming dendritic arbors, which are characteristic of the class I cells. The development of more complex arbors of class II-IV neurons depends on the absence of ab. This is Protein abrupt (ab) from Drosophila melanogaster (Fruit fly).